A 273-amino-acid chain; its full sequence is Putative pyruvate, phosphate dikinase regulatory protein (273 aa).

Position 153–160 (153–160 (GVSRTSKS)) interacts with ADP.

It belongs to the pyruvate, phosphate/water dikinase regulatory protein family. PDRP subfamily.

The catalysed reaction is N(tele)-phospho-L-histidyl/L-threonyl-[pyruvate, phosphate dikinase] + ADP = N(tele)-phospho-L-histidyl/O-phospho-L-threonyl-[pyruvate, phosphate dikinase] + AMP + H(+). The enzyme catalyses N(tele)-phospho-L-histidyl/O-phospho-L-threonyl-[pyruvate, phosphate dikinase] + phosphate + H(+) = N(tele)-phospho-L-histidyl/L-threonyl-[pyruvate, phosphate dikinase] + diphosphate. Bifunctional serine/threonine kinase and phosphorylase involved in the regulation of the pyruvate, phosphate dikinase (PPDK) by catalyzing its phosphorylation/dephosphorylation. This chain is Putative pyruvate, phosphate dikinase regulatory protein, found in Ehrlichia canis (strain Jake).